Consider the following 171-residue polypeptide: Putative lipoprotein LppO (171 aa).

An N-terminal signal peptide occupies residues 1–28 (MTDPRHTVRIAVGATALGVSALGATLPA). C29 is lipidated: N-palmitoyl cysteine. C29 carries the S-diacylglycerol cysteine lipid modification.

The protein localises to the cell membrane. The protein is Putative lipoprotein LppO (lppO) of Mycobacterium tuberculosis (strain CDC 1551 / Oshkosh).